The chain runs to 533 residues: MFPGARILATLTLALHLLHGAHAAIGPAGNMYIVNEDVSPDGFARSAVVARSVPATDPTPATASIPGVLVQGNKGDNFQLNVVNQLSDTTMLKTTSIHWHGFFQAGSSWADGPAFVTQCPVASGDSFLYNFNVPDQAGTFWYHSHLSTQYCDGLRGPFVVYDPSDPHLSLYDIDNADTVITLEDWYHIVAPQNAAIPTPDSTLINGKGRYAGGPTSPLAIINVESNKRYRFRLVSMSCDPNFTFSIDGHSLLVIEADAVNIVPITVDSIQIFAGQRYSFVLTANQAVDNYWIRANPNLGSTGFVGGINSAILRYAGATEDDPTTTSSTSTPLLETNLVPLENPGAPGPPVPGGADININLAMAFDFTTFELTINGVPFLPPTAPVLLQILSGASTAASLLPSGSIYELEANKVVEISMPALAVGGPHPFHLHGHTFDVIRSAGSTTYNFDTPARRDVVNTGTGANDNVTIRFVTDNPGPWFLHCHIDWHLEIGLAVVFAEDVTSISAPPAAWDDLCPIYNALSDNDKGGIVPS.

Residues 1–23 form the signal peptide; it reads MFPGARILATLTLALHLLHGAHA. Plastocyanin-like domains lie at 25-171, 173-336, and 382-501; these read IGPA…LSLY, IDNA…LETN, and TAPV…FAED. Cu cation-binding residues include His-98, His-100, His-143, and His-145. Disulfide bonds link Cys-119-Cys-516 and Cys-151-Cys-238. His-427, His-430, and His-432 together coordinate Cu cation. Asn-467 carries an N-linked (GlcNAc...) (high mannose) asparagine glycan. Residues His-483, Cys-484, His-485, and His-489 each contribute to the Cu cation site.

Belongs to the multicopper oxidase family. The cofactor is Cu cation. In terms of processing, N-glycosylated at Asn-467; contains a high-mannose glycan with a varying number of mannose residues.

It is found in the secreted. The enzyme catalyses 4 hydroquinone + O2 = 4 benzosemiquinone + 2 H2O. Its function is as follows. Lignin degradation and detoxification of lignin-derived products. The sequence is that of Laccase-2 (POX2) from Pleurotus ostreatus (Oyster mushroom).